The sequence spans 128 residues: uncharacterized protein (128 aa).

This is an uncharacterized protein from Bacillus subtilis (strain 168).